The chain runs to 193 residues: uncharacterized protein (193 aa).

The N-terminal stretch at 1–14 (MSTSLLFSLSPSSS) is a signal peptide.

This is an uncharacterized protein from Saccharomyces cerevisiae (strain ATCC 204508 / S288c) (Baker's yeast).